Reading from the N-terminus, the 1002-residue chain is Calmin (1002 aa).

The segment at 1 to 288 (MAAHEWDWFQ…IMTYVAQFLE (288 aa)) is actin-binding. In terms of domain architecture, Calponin-homology (CH) 1 spans 32 to 139 (NVQKRTFTRW…LIWNIILFFQ (108 aa)). The span at 149 to 168 (RNSPSSSLSPGSGGTDSDSS) shows a compositional bias: low complexity. The tract at residues 149-180 (RNSPSSSLSPGSGGTDSDSSFPPTPTAERSVA) is disordered. In terms of domain architecture, Calponin-homology (CH) 2 spans 187–291 (RKAIKALLAW…YVAQFLERFP (105 aa)). Ser-301 and Ser-402 each carry phosphoserine. 4 disordered regions span residues 389–418 (QGGPGKTSDISEPSPESSILSSRKENGRSN), 500–532 (NNNSQSSSCNGALESTARHDEESHSLSPPGENT), 581–716 (NKVP…SPPL), and 749–911 (DLKN…DSSI). The segment covering 396-409 (SDISEPSPESSILS) has biased composition (low complexity). Polar residues predominate over residues 500 to 509 (NNNSQSSSCN). Positions 585-606 (SPHETKPDEDAEAFENHAEKLG) are enriched in basic and acidic residues. The segment covering 607–617 (KRSIKSAHKKK) has biased composition (basic residues). Composition is skewed to basic and acidic residues over residues 618–635 (DSPEPQVKMDKHEPHQDS) and 650–659 (PVDKKPEVHE). Phosphoserine is present on Ser-619. Low complexity predominate over residues 681 to 697 (GVGEELSSSPPSSCVSL). Residue Thr-699 is modified to Phosphothreonine. Ser-713 and Ser-769 each carry phosphoserine. The segment covering 776–794 (GSQSSSSSSVPGESLPSAS) has biased composition (low complexity). Positions 818–834 (PHEDHQQRETKENDPMD) are enriched in basic and acidic residues. The span at 835–846 (SHQSQESPNLEN) shows a compositional bias: polar residues. Phosphoserine is present on residues Ser-838 and Ser-841. A compositionally biased stretch (basic and acidic residues) spans 854 to 863 (NVTKESISSK). Positions 898 to 910 (YSIPSRTSHSDSS) are enriched in polar residues. Ser-907 bears the Phosphoserine mark. Residues 977 to 997 (MMYFILFLWLLVYCLLLFPQL) form a helical; Anchor for type IV membrane protein membrane-spanning segment.

In terms of tissue distribution, widely expressed at intermediate level.

The protein resides in the membrane. This chain is Calmin (CLMN), found in Homo sapiens (Human).